The chain runs to 438 residues: ATP-dependent RNA helicase RhlB (438 aa).

The Q motif signature appears at 9–37 (QRFADLPLHPEVKQALAENGFEFCTPIQA). A Helicase ATP-binding domain is found at 40 to 219 (LPVLLQSKDI…YDHMNEPVKV (180 aa)). Residue 53–60 (AQTGTGKT) participates in ATP binding. The DEAD box signature appears at 165 to 168 (DEAD). The 148-residue stretch at 243–390 (KMRLLLTLIE…VSNYDSEALL (148 aa)) folds into the Helicase C-terminal domain. The interval 395-438 (TPAKIHRKHPSGTRNLRDRSGTSRPGAQRSGARPPRHDRTRRHS) is disordered. Basic residues predominate over residues 428 to 438 (PPRHDRTRRHS).

This sequence belongs to the DEAD box helicase family. RhlB subfamily. In terms of assembly, component of the RNA degradosome, which is a multiprotein complex involved in RNA processing and mRNA degradation.

It localises to the cytoplasm. It carries out the reaction ATP + H2O = ADP + phosphate + H(+). Functionally, DEAD-box RNA helicase involved in RNA degradation. Has RNA-dependent ATPase activity and unwinds double-stranded RNA. This chain is ATP-dependent RNA helicase RhlB, found in Shewanella baltica (strain OS223).